The sequence spans 123 residues: Putative C-type lectin protein FPV003/FPV258 (123 aa).

The C-type lectin domain occupies 21-122 (CRGPYTSYNN…CNATYGFVCI (102 aa)).

The chain is Putative C-type lectin protein FPV003/FPV258 from Fowlpox virus (strain NVSL) (FPV).